Consider the following 495-residue polypeptide: Ribosome biogenesis protein YTM1 (495 aa).

The interval 15-97 is ubiquitin-like (UBL) domain; that stretch reads VKVIFTTTEP…ETTLTLQYVR (83 aa). WD repeat units follow at residues 129 to 168, 175 to 213, 223 to 262, 264 to 295, 296 to 337, 386 to 426, and 458 to 495; these read WSSAANSSAAVQPGQERVLSASYDGLLRIWNASGSVIATS, GHTASIKAAKFLTSDRLASAGMDRTVRVWKYTESDHFTG, GHTGSVDWLDVDGHSKHILTASADGAIGFWSASKASAPEP, ASLLPGAHVSKRRKATSSVSTAQRGPLGLWSI, HTAP…STLT, GHAN…PATK, and GDGCKVFSVVWDKLGIFSGGEDKKVQVNRGRNIVTEQK.

The protein belongs to the WD repeat WDR12/YTM1 family. As to quaternary structure, component of the NOP7 complex, composed of ERB1, NOP7 and YTM1. The complex is held together by ERB1, which interacts with NOP7 via its N-terminal domain and with YTM1 via a high-affinity interaction between the seven-bladed beta-propeller domains of the 2 proteins. The NOP7 complex associates with the 66S pre-ribosome. Interacts (via UBL domain) with MDN1 (via VWFA/MIDAS domain).

The protein localises to the nucleus. Its subcellular location is the nucleolus. It is found in the nucleoplasm. Its function is as follows. Component of the NOP7 complex, which is required for maturation of the 25S and 5.8S ribosomal RNAs and formation of the 60S ribosome. In Chaetomium thermophilum (strain DSM 1495 / CBS 144.50 / IMI 039719) (Thermochaetoides thermophila), this protein is Ribosome biogenesis protein YTM1.